The sequence spans 323 residues: uncharacterized protein (323 aa).

A disordered region spans residues 1–21 (MGSYYSTESTKSNESNETTNN). Gly2 is lipidated: N-myristoyl glycine; by host.

This is an uncharacterized protein from Acanthamoeba polyphaga (Amoeba).